A 145-amino-acid chain; its full sequence is MKAVIQRVCSASVVVEGEVVGEIGQGILVLLGVEKGDDEAKASWLAEKIISLRIFGDDSDKMNLSLRDVGGSLLAVSQFTLAGNCAKGRRPSFDSAAPPEEGRRLYDHFVQAVRAKGVATATGIFQADMRVSLVNDGPVTFILER.

A Gly-cisPro motif, important for rejection of L-amino acids motif is present at residues 137–138 (GP).

It belongs to the DTD family. In terms of assembly, homodimer.

The protein localises to the cytoplasm. It carries out the reaction glycyl-tRNA(Ala) + H2O = tRNA(Ala) + glycine + H(+). It catalyses the reaction a D-aminoacyl-tRNA + H2O = a tRNA + a D-alpha-amino acid + H(+). Functionally, an aminoacyl-tRNA editing enzyme that deacylates mischarged D-aminoacyl-tRNAs. Also deacylates mischarged glycyl-tRNA(Ala), protecting cells against glycine mischarging by AlaRS. Acts via tRNA-based rather than protein-based catalysis; rejects L-amino acids rather than detecting D-amino acids in the active site. By recycling D-aminoacyl-tRNA to D-amino acids and free tRNA molecules, this enzyme counteracts the toxicity associated with the formation of D-aminoacyl-tRNA entities in vivo and helps enforce protein L-homochirality. This chain is D-aminoacyl-tRNA deacylase, found in Pelobacter propionicus (strain DSM 2379 / NBRC 103807 / OttBd1).